The following is a 592-amino-acid chain: Putative amidase ARB_02965 (592 aa).

An N-terminal signal peptide occupies residues 1 to 21 (MKGPITFLLQLGAVYTSIASA). An N-linked (GlcNAc...) asparagine glycan is attached at asparagine 120. Lysine 161 acts as the Charge relay system in catalysis. The N-linked (GlcNAc...) asparagine glycan is linked to asparagine 217. The active-site Charge relay system is the serine 242. Substrate contacts are provided by residues serine 242 and 263–266 (TSGS). The active-site Acyl-ester intermediate is serine 266. 3 N-linked (GlcNAc...) asparagine glycosylation sites follow: asparagine 326, asparagine 430, and asparagine 528.

It belongs to the amidase family.

Its subcellular location is the secreted. This chain is Putative amidase ARB_02965, found in Arthroderma benhamiae (strain ATCC MYA-4681 / CBS 112371) (Trichophyton mentagrophytes).